A 380-amino-acid polypeptide reads, in one-letter code: Putative glutamate--cysteine ligase 2-2 (380 aa).

The protein belongs to the glutamate--cysteine ligase type 2 family. YbdK subfamily.

It carries out the reaction L-cysteine + L-glutamate + ATP = gamma-L-glutamyl-L-cysteine + ADP + phosphate + H(+). Its function is as follows. ATP-dependent carboxylate-amine ligase which exhibits weak glutamate--cysteine ligase activity. The chain is Putative glutamate--cysteine ligase 2-2 from Nocardia farcinica (strain IFM 10152).